We begin with the raw amino-acid sequence, 150 residues long: Large ribosomal subunit protein uL13 (150 aa).

The segment at 127-150 is disordered; sequence KGTEHPHSAQKPQPLQLNPSATAK. Positions 136 to 150 are enriched in polar residues; sequence QKPQPLQLNPSATAK.

Belongs to the universal ribosomal protein uL13 family. In terms of assembly, part of the 50S ribosomal subunit.

Functionally, this protein is one of the early assembly proteins of the 50S ribosomal subunit, although it is not seen to bind rRNA by itself. It is important during the early stages of 50S assembly. The sequence is that of Large ribosomal subunit protein uL13 from Synechococcus sp. (strain CC9902).